We begin with the raw amino-acid sequence, 232 residues long: Ubiquinone biosynthesis O-methyltransferase (232 aa).

S-adenosyl-L-methionine contacts are provided by arginine 36, glycine 55, aspartate 76, and leucine 120.

It belongs to the methyltransferase superfamily. UbiG/COQ3 family.

It carries out the reaction a 3-demethylubiquinol + S-adenosyl-L-methionine = a ubiquinol + S-adenosyl-L-homocysteine + H(+). The enzyme catalyses a 3-(all-trans-polyprenyl)benzene-1,2-diol + S-adenosyl-L-methionine = a 2-methoxy-6-(all-trans-polyprenyl)phenol + S-adenosyl-L-homocysteine + H(+). It participates in cofactor biosynthesis; ubiquinone biosynthesis. Functionally, O-methyltransferase that catalyzes the 2 O-methylation steps in the ubiquinone biosynthetic pathway. This is Ubiquinone biosynthesis O-methyltransferase from Pseudomonas fluorescens (strain ATCC BAA-477 / NRRL B-23932 / Pf-5).